The chain runs to 578 residues: Nuclear receptor subfamily 1 group D member 2 (578 aa).

Positions Met-1–Val-60 are required for phosphorylation by CSNK1E and cytoplasmic localization. Positions Met-1–Met-99 are modulating. Positions Ser-13–Ser-47 are enriched in low complexity. The tract at residues Ser-13–Ser-89 is disordered. Ser-46 is subject to Phosphoserine; by GSK3-beta. Polar residues predominate over residues Asn-48–Ser-61. A DNA-binding region (nuclear receptor) is located at residues Val-100–Phe-176. 2 consecutive NR C4-type zinc fingers follow at residues Cys-103–Cys-123 and Cys-140–Cys-164. An N6-acetyllysine; by KAT5 mark is found at Lys-162 and Lys-163. The segment at Glu-214 to Phe-247 is disordered. The span at Leu-227–Asn-237 shows a compositional bias: basic and acidic residues. Cystine bridges form between Cys-336–Cys-342 and Cys-373–Cys-383. An NR LBD domain is found at Arg-368–Pro-578. Heme is bound by residues Cys-383 and His-567. The segment at Ser-396 to Pro-578 is interaction with ZNHIT1.

It belongs to the nuclear hormone receptor family. NR1 subfamily. In terms of assembly, binds DNA as a monomer or a homodimer. Interacts with NCOA5 coactivator, leading to a strong increase of transcription of target genes. Interacts (via N-terminus) with KAT5. Interacts (via C-terminus) with HDAC1. Interacts with ZNHIT1. Interacts with SIAH2. Deacetylated by HDAC1. Acetylation and deacetylation regulate its transcriptional regulatory activity. Post-translationally, under more reducing intracellular redox conditions, Cys-383 is in its heme-bound state, which is optimal for recruitment of the NCOR1/HDAC3 corepressor complex and repression of target genes. When subjected to oxidative stress conditions, Cys-383 undergoes oxidation to form a disulfide bridge with Cys-373, also triggering a ligand switch that results in release of bound heme and derepression of target genes. In terms of processing, ubiquitinated by SIAH2; leading to its proteasomal degradation. Phosphorylated by CSNK1E; phosphorylation enhances its cytoplasmic localization.

It is found in the nucleus. It localises to the cytoplasm. With respect to regulation, the heme-bound form can bind gaseous signaling molecules such as CO and nitric oxide (NO) and NO can reverse its transcriptional repressor activity. Transcriptional repressor which coordinates circadian rhythm and metabolic pathways in a heme-dependent manner. Integral component of the complex transcription machinery that governs circadian rhythmicity and forms a critical negative limb of the circadian clock by directly repressing the expression of core clock components BMAL1 and CLOCK. Also regulates genes involved in metabolic functions, including lipid metabolism and the inflammatory response. Acts as a receptor for heme which stimulates its interaction with the NCOR1/HDAC3 corepressor complex, enhancing transcriptional repression. Recognizes two classes of DNA response elements within the promoter of its target genes and can bind to DNA as either monomers or homodimers, depending on the nature of the response element. Binds as a monomer to a response element composed of the consensus half-site motif 5'-[A/G]GGTCA-3' preceded by an A/T-rich 5' sequence (RevRE), or as a homodimer to a direct repeat of the core motif spaced by two nuclegotides (RevDR-2). Acts as a potent competitive repressor of ROR alpha (RORA) function and also negatively regulates the expression of NR1D1. Regulates lipid and energy homeostasis in the skeletal muscle via repression of genes involved in lipid metabolism and myogenesis including: CD36, FABP3, FABP4, UCP3, SCD1 and MSTN. Regulates hepatic lipid metabolism via the repression of APOC3. Represses gene expression at a distance in macrophages by inhibiting the transcription of enhancer-derived RNAs (eRNAs). In addition to its activity as a repressor, can also act as a transcriptional activator. Acts as a transcriptional activator of the sterol regulatory element-binding protein 1 (SREBF1) and the inflammatory mediator interleukin-6 (IL6) in the skeletal muscle. Plays a role in the regulation of circadian sleep/wake cycle; essential for maintaining wakefulness during the dark phase or active period. Key regulator of skeletal muscle mitochondrial function; negatively regulates the skeletal muscle expression of core clock genes and genes involved in mitochondrial biogenesis, fatty acid beta-oxidation and lipid metabolism. May play a role in the circadian control of neutrophilic inflammation in the lung. This chain is Nuclear receptor subfamily 1 group D member 2, found in Rattus norvegicus (Rat).